The primary structure comprises 491 residues: Probable glycine dehydrogenase (decarboxylating) subunit 2 (491 aa).

An N6-(pyridoxal phosphate)lysine modification is found at lysine 273.

It belongs to the GcvP family. C-terminal subunit subfamily. In terms of assembly, the glycine cleavage system is composed of four proteins: P, T, L and H. In this organism, the P 'protein' is a heterodimer of two subunits. It depends on pyridoxal 5'-phosphate as a cofactor.

The catalysed reaction is N(6)-[(R)-lipoyl]-L-lysyl-[glycine-cleavage complex H protein] + glycine + H(+) = N(6)-[(R)-S(8)-aminomethyldihydrolipoyl]-L-lysyl-[glycine-cleavage complex H protein] + CO2. In terms of biological role, the glycine cleavage system catalyzes the degradation of glycine. The P protein binds the alpha-amino group of glycine through its pyridoxal phosphate cofactor; CO(2) is released and the remaining methylamine moiety is then transferred to the lipoamide cofactor of the H protein. In Bacillus cytotoxicus (strain DSM 22905 / CIP 110041 / 391-98 / NVH 391-98), this protein is Probable glycine dehydrogenase (decarboxylating) subunit 2.